The chain runs to 235 residues: Uridylate kinase (235 aa).

9 to 12 (KLSG) is a binding site for ATP. Glycine 51 contacts UMP. ATP is bound by residues glycine 52 and arginine 56. Residues aspartate 71 and 132-139 (TGNPYFTT) each bind UMP. Threonine 159, tyrosine 165, and aspartate 168 together coordinate ATP.

Belongs to the UMP kinase family. Homohexamer.

The protein localises to the cytoplasm. It carries out the reaction UMP + ATP = UDP + ADP. It functions in the pathway pyrimidine metabolism; CTP biosynthesis via de novo pathway; UDP from UMP (UMPK route): step 1/1. With respect to regulation, inhibited by UTP. Functionally, catalyzes the reversible phosphorylation of UMP to UDP. This chain is Uridylate kinase, found in Christiangramia forsetii (strain DSM 17595 / CGMCC 1.15422 / KT0803) (Gramella forsetii).